A 415-amino-acid chain; its full sequence is Lipoyl synthase, mitochondrial (415 aa).

The transit peptide at M1 to Y32 directs the protein to the mitochondrion. Residues R30 to A50 form a disordered region. Low complexity predominate over residues A33–T49. [4Fe-4S] cluster contacts are provided by C132, C137, C143, C163, C167, C170, and S378. The Radical SAM core domain maps to G146–L367.

This sequence belongs to the radical SAM superfamily. Lipoyl synthase family. Requires [4Fe-4S] cluster as cofactor.

The protein resides in the mitochondrion. It carries out the reaction [[Fe-S] cluster scaffold protein carrying a second [4Fe-4S](2+) cluster] + N(6)-octanoyl-L-lysyl-[protein] + 2 oxidized [2Fe-2S]-[ferredoxin] + 2 S-adenosyl-L-methionine + 4 H(+) = [[Fe-S] cluster scaffold protein] + N(6)-[(R)-dihydrolipoyl]-L-lysyl-[protein] + 4 Fe(3+) + 2 hydrogen sulfide + 2 5'-deoxyadenosine + 2 L-methionine + 2 reduced [2Fe-2S]-[ferredoxin]. It functions in the pathway protein modification; protein lipoylation via endogenous pathway; protein N(6)-(lipoyl)lysine from octanoyl-[acyl-carrier-protein]: step 2/2. Catalyzes the radical-mediated insertion of two sulfur atoms into the C-6 and C-8 positions of the octanoyl moiety bound to the lipoyl domains of lipoate-dependent enzymes, thereby converting the octanoylated domains into lipoylated derivatives. In Neosartorya fischeri (strain ATCC 1020 / DSM 3700 / CBS 544.65 / FGSC A1164 / JCM 1740 / NRRL 181 / WB 181) (Aspergillus fischerianus), this protein is Lipoyl synthase, mitochondrial.